The chain runs to 695 residues: DNA ligase (695 aa).

NAD(+)-binding positions include 44–48 (DAEYD), 93–94 (SL), and glutamate 123. The N6-AMP-lysine intermediate role is filled by lysine 125. 4 residues coordinate NAD(+): arginine 146, glutamate 184, lysine 300, and lysine 324. Positions 418, 421, 436, and 442 each coordinate Zn(2+). Positions 605-694 (SAAKPLAGIT…PDAARSMAQR (90 aa)) constitute a BRCT domain.

Belongs to the NAD-dependent DNA ligase family. LigA subfamily. The cofactor is Mg(2+). Requires Mn(2+) as cofactor.

It carries out the reaction NAD(+) + (deoxyribonucleotide)n-3'-hydroxyl + 5'-phospho-(deoxyribonucleotide)m = (deoxyribonucleotide)n+m + AMP + beta-nicotinamide D-nucleotide.. Functionally, DNA ligase that catalyzes the formation of phosphodiester linkages between 5'-phosphoryl and 3'-hydroxyl groups in double-stranded DNA using NAD as a coenzyme and as the energy source for the reaction. It is essential for DNA replication and repair of damaged DNA. The polypeptide is DNA ligase (Acidothermus cellulolyticus (strain ATCC 43068 / DSM 8971 / 11B)).